A 277-amino-acid polypeptide reads, in one-letter code: MARDLIGPALPPGFKAGGSAEDEERDSSPVAGPALPPNYKSSSSESSDSDEDSSSLSEEGNQESEEDDTGPPARKLRRNQDDDDDDDDEGFFGPALPPGFKKQDDSPPRPMIGPALPPGFLKSTQKSDEGRSDPGQVSSDFNSEKETDSSEEEDIVGPMPAKGPVNSSVTAEFEKRAQRMKEKLTKGDDDSSKPITRESWMTELPPEMKDFGLGPRTFKRRADGKSGDRSVWTDTPADRERKAKVRGLVCSCISVHVGSILKKNRRQNYSRVLFLSL.

The interval 1 to 240 is disordered; the sequence is MARDLIGPAL…VWTDTPADRE (240 aa). At alanine 2 the chain carries N-acetylalanine. Positions 7–12 match the GPALPP motif 1 motif; that stretch reads GPALPP. At serine 28 the chain carries Phosphoserine. The GPALPP motif 2 motif lies at 32–37; the sequence is GPALPP. 2 stretches are compositionally biased toward acidic residues: residues 60 to 69 and 81 to 90; these read GNQESEEDDT and DDDDDDDDEG. The GPALPP motif 3 signature appears at 93–98; the sequence is GPALPP. Serine 106 is subject to Phosphoserine. Residues 108–117 show a composition bias toward pro residues; the sequence is PRPMIGPALP. Positions 113-118 match the GPALPP motif 4 motif; that stretch reads GPALPP. Phosphoserine occurs at positions 138 and 143. Threonine 147 is subject to Phosphothreonine. Serine 149 and serine 150 each carry phosphoserine. The span at 172 to 196 shows a compositional bias: basic and acidic residues; it reads EFEKRAQRMKEKLTKGDDDSSKPIT.

The polypeptide is GPALPP motifs-containing protein 1 (GPALPP1) (Bos taurus (Bovine)).